We begin with the raw amino-acid sequence, 1902 residues long: Rho GTPase-activating protein 21-B (1902 aa).

Disordered regions lie at residues 1 to 44 (MATR…EGFC), 78 to 97 (TSVK…RPRN), 284 to 317 (RTNR…NVPM), 348 to 369 (PAAH…GSHQ), 409 to 450 (NTTD…SQER), 581 to 603 (TRNF…RSGF), 613 to 632 (IPTP…DDGI), and 879 to 902 (KARE…DVFS). Residues 10 to 22 (EQQQEPSSPASEI) show a composition bias toward polar residues. One can recognise a PDZ domain in the interval 77-162 (HTSVKDEENG…TLELSVMPKD (86 aa)). Positions 305–317 (TTSPSSSTPNVPM) are enriched in low complexity. Polar residues predominate over residues 409 to 424 (NTTDYNQMLPNRSSGQ). In terms of domain architecture, PH spans 903-1016 (DSNKEGFLYF…WIKAIQENGN (114 aa)). The segment covering 1039–1063 (TMMSSSSNKTEPSPKAQRQTLSIRQ) has biased composition (polar residues). The segment at 1039 to 1095 (TMMSSSSNKTEPSPKAQRQTLSIRQQFRAGKPDDDISPPKDKGSWRRIMKKPFEKKP) is disordered. The span at 1068–1082 (GKPDDDISPPKDKGS) shows a compositional bias: basic and acidic residues. The Rho-GAP domain occupies 1103–1295 (VRLDDCPPAH…TLIQKHDWFF (193 aa)). Disordered regions lie at residues 1306–1357 (TVHE…GSGK), 1375–1394 (RKRK…DELD), 1494–1520 (MSDS…VSPE), 1559–1704 (VQSV…EPAW), 1729–1748 (QKAN…RHTL), and 1803–1890 (TSTS…KLSG). Low complexity predominate over residues 1339 to 1357 (SDSATSDSAKSKGSWGSGK). Residues 1494–1511 (MSDSGTMLSTSSQASVQG) are compositionally biased toward polar residues. Composition is skewed to basic and acidic residues over residues 1575–1585 (SELVSEGRPME) and 1601–1613 (FDRR…EEPS). The span at 1614-1630 (RNVQVNSEGSPSCTEGS) shows a compositional bias: polar residues. Basic and acidic residues-rich tracts occupy residues 1634–1652 (KMDR…DTLS) and 1661–1673 (TDSD…KTEE). Residues 1737–1748 (RKKKNIRRRHTL) show a composition bias toward basic residues. The span at 1865–1878 (NGDSFQSKNKNNFS) shows a compositional bias: polar residues.

It localises to the golgi apparatus membrane. The protein localises to the cell junction. It is found in the cytoplasmic vesicle membrane. Its subcellular location is the cytoplasm. The protein resides in the cytoskeleton. GTPase-activating protein (GAP) for rhoa and cdc42. The chain is Rho GTPase-activating protein 21-B (arhgap21-b) from Xenopus laevis (African clawed frog).